We begin with the raw amino-acid sequence, 138 residues long: ATP synthase epsilon chain (138 aa).

The protein belongs to the ATPase epsilon chain family. As to quaternary structure, F-type ATPases have 2 components, CF(1) - the catalytic core - and CF(0) - the membrane proton channel. CF(1) has five subunits: alpha(3), beta(3), gamma(1), delta(1), epsilon(1). CF(0) has three main subunits: a, b and c.

The protein resides in the cell membrane. Functionally, produces ATP from ADP in the presence of a proton gradient across the membrane. This chain is ATP synthase epsilon chain (atpC), found in Buchnera aphidicola subsp. Acyrthosiphon pisum (strain APS) (Acyrthosiphon pisum symbiotic bacterium).